The following is an 83-amino-acid chain: U20-theraphotoxin-Cg1a 1 (83 aa).

Positions 1–21 (MKVSVLITLAVLGVMFVWTSA) are cleaved as a signal peptide. Residues 22–47 (AELEERGSDQPAWLKSLERIFQSEER) constitute a propeptide that is removed on maturation. Disulfide bonds link Cys49-Cys63, Cys56-Cys68, and Cys62-Cys76.

The protein belongs to the neurotoxin 10 (Hwtx-1) family. 40 (Jztx-35) subfamily. Expressed by the venom gland.

It localises to the secreted. In terms of biological role, probable ion channel inhibitor. In Chilobrachys guangxiensis (Chinese earth tiger tarantula), this protein is U20-theraphotoxin-Cg1a 1.